The primary structure comprises 122 residues: Ribosome-binding factor A (122 aa).

It belongs to the RbfA family. In terms of assembly, monomer. Binds 30S ribosomal subunits, but not 50S ribosomal subunits or 70S ribosomes.

It localises to the cytoplasm. In terms of biological role, one of several proteins that assist in the late maturation steps of the functional core of the 30S ribosomal subunit. Associates with free 30S ribosomal subunits (but not with 30S subunits that are part of 70S ribosomes or polysomes). Required for efficient processing of 16S rRNA. May interact with the 5'-terminal helix region of 16S rRNA. The polypeptide is Ribosome-binding factor A (Geotalea uraniireducens (strain Rf4) (Geobacter uraniireducens)).